A 348-amino-acid chain; its full sequence is Dihydroorotase (348 aa).

Positions 17 and 19 each coordinate Zn(2+). Residues 19 to 21 and Asn45 each bind substrate; that span reads HLR. Residues Lys103, His140, and His178 each coordinate Zn(2+). The residue at position 103 (Lys103) is an N6-carboxylysine. Position 140 (His140) interacts with substrate. Leu223 contributes to the substrate binding site. Residue Asp251 participates in Zn(2+) binding. The active site involves Asp251. His255 and Ala267 together coordinate substrate.

The protein belongs to the metallo-dependent hydrolases superfamily. DHOase family. Class II DHOase subfamily. Homodimer. Zn(2+) serves as cofactor.

It catalyses the reaction (S)-dihydroorotate + H2O = N-carbamoyl-L-aspartate + H(+). Its pathway is pyrimidine metabolism; UMP biosynthesis via de novo pathway; (S)-dihydroorotate from bicarbonate: step 3/3. Functionally, catalyzes the reversible cyclization of carbamoyl aspartate to dihydroorotate. The polypeptide is Dihydroorotase (Enterobacter sp. (strain 638)).